The following is an 85-amino-acid chain: Large ribosomal subunit protein eL43 (85 aa).

The C4-type zinc-finger motif lies at 38–59; sequence CPVCGRKAVRRISTGIWQCQKC.

It belongs to the eukaryotic ribosomal protein eL43 family. The cofactor is Zn(2+).

The protein is Large ribosomal subunit protein eL43 of Thermococcus sibiricus (strain DSM 12597 / MM 739).